Consider the following 89-residue polypeptide: Porphobilinogen deaminase (89 aa).

The protein belongs to the HMBS family. Monomer. The cofactor is dipyrromethane.

It catalyses the reaction 4 porphobilinogen + H2O = hydroxymethylbilane + 4 NH4(+). It participates in porphyrin-containing compound metabolism; protoporphyrin-IX biosynthesis; coproporphyrinogen-III from 5-aminolevulinate: step 2/4. Functionally, tetrapolymerization of the monopyrrole PBG into the hydroxymethylbilane pre-uroporphyrinogen in several discrete steps. The polypeptide is Porphobilinogen deaminase (hemC) (Dickeya chrysanthemi (Pectobacterium chrysanthemi)).